Reading from the N-terminus, the 425-residue chain is Elongation factor 1-alpha (425 aa).

Positions 5–221 (KPHMNLAVIG…DTFKEPSKPT (217 aa)) constitute a tr-type G domain. The interval 14-21 (GHIDHGKS) is G1. GTP is bound at residue 14–21 (GHIDHGKS). Position 21 (Ser-21) interacts with Mg(2+). Residues 70–74 (GITID) form a G2 region. The interval 91–94 (DCPG) is G3. Residues 91–95 (DCPGH) and 146–149 (NKMD) contribute to the GTP site. The interval 146–149 (NKMD) is G4. The interval 185–187 (SSL) is G5.

It belongs to the TRAFAC class translation factor GTPase superfamily. Classic translation factor GTPase family. EF-Tu/EF-1A subfamily.

Its subcellular location is the cytoplasm. It carries out the reaction GTP + H2O = GDP + phosphate + H(+). GTP hydrolase that promotes the GTP-dependent binding of aminoacyl-tRNA to the A-site of ribosomes during protein biosynthesis. This Methanoregula boonei (strain DSM 21154 / JCM 14090 / 6A8) protein is Elongation factor 1-alpha.